Consider the following 134-residue polypeptide: UPF0216 protein AF_0460 (134 aa).

Belongs to the UPF0216 family.

In Archaeoglobus fulgidus (strain ATCC 49558 / DSM 4304 / JCM 9628 / NBRC 100126 / VC-16), this protein is UPF0216 protein AF_0460.